Here is a 554-residue protein sequence, read N- to C-terminus: 3-(3-hydroxy-phenyl)propionate/3-hydroxycinnamic acid hydroxylase (554 aa).

FAD contacts are provided by residues 17 to 46 (QVAI…VVEK) and 285 to 295 (FRIDRVLLAGD).

The protein belongs to the PheA/TfdB FAD monooxygenase family. It depends on FAD as a cofactor.

The enzyme catalyses 3-(3-hydroxyphenyl)propanoate + NADH + O2 + H(+) = 3-(2,3-dihydroxyphenyl)propanoate + NAD(+) + H2O. It carries out the reaction (2E)-3-(3-hydroxyphenyl)prop-2-enoate + NADH + O2 + H(+) = (2E)-3-(2,3-dihydroxyphenyl)prop-2-enoate + NAD(+) + H2O. Its pathway is aromatic compound metabolism; 3-phenylpropanoate degradation. Catalyzes the insertion of one atom of molecular oxygen into position 2 of the phenyl ring of 3-(3-hydroxyphenyl)propionate (3-HPP) and hydroxycinnamic acid (3HCI). This chain is 3-(3-hydroxy-phenyl)propionate/3-hydroxycinnamic acid hydroxylase, found in Escherichia coli (strain 55989 / EAEC).